The chain runs to 417 residues: DNA primase small subunit (417 aa).

M1 carries the N-acetylmethionine modification. Catalysis depends on residues E44, D109, and D111. The Mg(2+) site is built by D109 and D111. 2 residues coordinate Mn(2+): D109 and D111. Position 109–111 (109–111 (DID)) interacts with a ribonucleoside 5'-triphosphate. Residues C121, C122, C128, and C131 each coordinate Zn(2+). Positions 121-131 (CCSSADICSKC) match the Zinc knuckle motif motif. Residue 160-166 (SGRRGVH) participates in a ribonucleoside 5'-triphosphate binding. D305 contacts Mg(2+). D305 provides a ligand contact to Mn(2+). Residues 314–317 (HLLK) and H323 contribute to the a ribonucleoside 5'-triphosphate site.

It belongs to the eukaryotic-type primase small subunit family. As to quaternary structure, heterodimer of a catalytic subunit PRIM1 and a regulatory subunit PRIM2, also known as the DNA primase complex. Interacts with PRIM2/p58 (via C-terminus). Component of the alpha DNA polymerase complex (also known as the alpha DNA polymerase-primase complex) consisting of four subunits: the catalytic subunit POLA1, the regulatory subunit POLA2, and the primase complex subunits PRIM1 and PRIM2 respectively. Within the complex, POLA1 directly interacts with PRIM2. It depends on Mg(2+) as a cofactor. Mn(2+) is required as a cofactor.

It carries out the reaction ssDNA + n NTP = ssDNA/pppN(pN)n-1 hybrid + (n-1) diphosphate.. With respect to regulation, the presence of the regulatory subunit PRIM2/p58 accelerates the kinetics of initiation and primer extension. Its function is as follows. Catalytic subunit of the DNA primase complex and component of the DNA polymerase alpha complex (also known as the alpha DNA polymerase-primase complex) which play an essential role in the initiation of DNA synthesis. During the S phase of the cell cycle, the DNA polymerase alpha complex (composed of a catalytic subunit POLA1, an accessory subunit POLA2 and two primase subunits, the catalytic subunit PRIM1 and the regulatory subunit PRIM2) is recruited to DNA at the replicative forks via direct interactions with MCM10 and WDHD1. The primase subunit of the polymerase alpha complex initiates DNA synthesis by oligomerising short RNA primers on both leading and lagging strands. These primers are initially extended by the polymerase alpha catalytic subunit and subsequently transferred to polymerase delta and polymerase epsilon for processive synthesis on the lagging and leading strand, respectively. In the primase complex, both subunits are necessary for the initial di-nucleotide formation, but the extension of the primer depends only on the catalytic subunit. Can add both ribo- and deoxynucleotides during elongation of the primers. Synthesizes 9-mer RNA primers (also known as the 'unit length' RNA primers). Incorporates only ribonucleotides in the presence of ribo- and deoxy-nucleotide triphosphates (rNTPs, dNTPs). Requires template thymine or cytidine to start the RNA primer synthesis, with an adenine or guanine at its 5'-end. Binds single stranded DNA. This Mus musculus (Mouse) protein is DNA primase small subunit (Prim1).